A 413-amino-acid polypeptide reads, in one-letter code: Tyrosine--tRNA ligase (413 aa).

Tyr-34 provides a ligand contact to L-tyrosine. The 'HIGH' region signature appears at 39 to 48 (PTSHSLTVGH). L-tyrosine contacts are provided by Tyr-164 and Gln-168. The 'KMSKS' region motif lies at 225–229 (KFGKS). Position 228 (Lys-228) interacts with ATP. The S4 RNA-binding domain occupies 347–413 (ILLVDALVQT…GKKNNALIVF (67 aa)).

This sequence belongs to the class-I aminoacyl-tRNA synthetase family. TyrS type 1 subfamily. As to quaternary structure, homodimer.

It localises to the cytoplasm. It carries out the reaction tRNA(Tyr) + L-tyrosine + ATP = L-tyrosyl-tRNA(Tyr) + AMP + diphosphate + H(+). Functionally, catalyzes the attachment of tyrosine to tRNA(Tyr) in a two-step reaction: tyrosine is first activated by ATP to form Tyr-AMP and then transferred to the acceptor end of tRNA(Tyr). The sequence is that of Tyrosine--tRNA ligase from Onion yellows phytoplasma (strain OY-M).